The chain runs to 648 residues: Chaperone protein HtpG (648 aa).

Positions 1–353 are a; substrate-binding; that stretch reads MNARVEQLEF…AQDMSLNVSR (353 aa). The tract at residues 354 to 567 is b; the sequence is EILQQDRQIK…TFGITPALAR (214 aa). The segment at 568–648 is c; it reads IYRATGQDVP…LLADRLTRTL (81 aa).

It belongs to the heat shock protein 90 family. As to quaternary structure, homodimer.

It is found in the cytoplasm. Molecular chaperone. Has ATPase activity. This chain is Chaperone protein HtpG, found in Mycobacterium ulcerans (strain Agy99).